The following is a 433-amino-acid chain: Elongation factor 1-alpha (433 aa).

The tr-type G domain maps to 5 to 227 (KPHLNLVVIG…AFDFFKEPPR (223 aa)). A G1 region spans residues 14–21 (GHIDHGKS). 14 to 21 (GHIDHGKS) is a GTP binding site. Mg(2+) is bound at residue serine 21. Residues 70-74 (GITID) are G2. The G3 stretch occupies residues 91–94 (DAPG). GTP-binding positions include 91-95 (DAPGH) and 153-156 (NKMD). Positions 153–156 (NKMD) are G4. The G5 stretch occupies residues 192–194 (SAW).

The protein belongs to the TRAFAC class translation factor GTPase superfamily. Classic translation factor GTPase family. EF-Tu/EF-1A subfamily.

The protein resides in the cytoplasm. It carries out the reaction GTP + H2O = GDP + phosphate + H(+). In terms of biological role, GTP hydrolase that promotes the GTP-dependent binding of aminoacyl-tRNA to the A-site of ribosomes during protein biosynthesis. The sequence is that of Elongation factor 1-alpha from Thermofilum pendens (strain DSM 2475 / Hrk 5).